A 149-amino-acid chain; its full sequence is Large ribosomal subunit protein uL22c (149 aa).

Belongs to the universal ribosomal protein uL22 family. Part of the 50S ribosomal subunit.

The protein localises to the plastid. The protein resides in the chloroplast. In terms of biological role, this protein binds specifically to 23S rRNA. Functionally, the globular domain of the protein is located near the polypeptide exit tunnel on the outside of the subunit, while an extended beta-hairpin is found that lines the wall of the exit tunnel in the center of the 70S ribosome. The polypeptide is Large ribosomal subunit protein uL22c (rpl22-A) (Pelargonium hortorum (Common geranium)).